The primary structure comprises 177 residues: Large ribosomal subunit protein uL6 (177 aa).

K44 bears the N6-acetyllysine mark.

This sequence belongs to the universal ribosomal protein uL6 family. In terms of assembly, part of the 50S ribosomal subunit.

In terms of biological role, this protein binds to the 23S rRNA, and is important in its secondary structure. It is located near the subunit interface in the base of the L7/L12 stalk, and near the tRNA binding site of the peptidyltransferase center. In Escherichia fergusonii (strain ATCC 35469 / DSM 13698 / CCUG 18766 / IAM 14443 / JCM 21226 / LMG 7866 / NBRC 102419 / NCTC 12128 / CDC 0568-73), this protein is Large ribosomal subunit protein uL6.